Reading from the N-terminus, the 701-residue chain is Larval serum protein 2 (701 aa).

Positions Met-1 to Ala-21 are cleaved as a signal peptide. N-linked (GlcNAc...) asparagine glycosylation occurs at Asn-204.

The protein belongs to the hemocyanin family. As to quaternary structure, homohexamer.

It is found in the secreted. The protein localises to the extracellular space. Larval storage protein (LSP) which may serve as a store of amino acids for synthesis of adult proteins. This is Larval serum protein 2 (Lsp2) from Drosophila melanogaster (Fruit fly).